The following is a 310-amino-acid chain: tRNA methyltransferase 10 homolog B (310 aa).

Positions 55–94 form a coiled coil; it reads RKQRNWERRLEVKKSKRKEEKLRKKLNRQDKDVSDAQLSK. Residues 101–298 enclose the SAM-dependent MTase TRM10-type domain; the sequence is TKERLEGARA…AGIPPGKGFV (198 aa).

This sequence belongs to the class IV-like SAM-binding methyltransferase superfamily. TRM10 family.

It catalyses the reaction guanosine(9) in tRNA + S-adenosyl-L-methionine = N(1)-methylguanosine(9) in tRNA + S-adenosyl-L-homocysteine + H(+). In terms of biological role, S-adenosyl-L-methionine-dependent guanine N(1)-methyltransferase that catalyzes the formation of N(1)-methylguanine at position 9 (m1G9) in tRNAs. Probably not able to catalyze formation of N(1)-methyladenine at position 9 (m1A9) in tRNAs. The protein is tRNA methyltransferase 10 homolog B (trmt10b) of Danio rerio (Zebrafish).